We begin with the raw amino-acid sequence, 222 residues long: Large ribosomal subunit protein uL1 (222 aa).

The protein belongs to the universal ribosomal protein uL1 family. As to quaternary structure, part of the 50S ribosomal subunit.

In terms of biological role, binds directly to 23S rRNA. Probably involved in E site tRNA release. Its function is as follows. Protein L1 is also a translational repressor protein, it controls the translation of its operon by binding to its mRNA. This Pyrobaculum aerophilum (strain ATCC 51768 / DSM 7523 / JCM 9630 / CIP 104966 / NBRC 100827 / IM2) protein is Large ribosomal subunit protein uL1.